The following is a 78-amino-acid chain: uncharacterized protein (78 aa).

The interval 1-28 (MGGGNAQKSAMARAKNLEKAKAAGKGSQ) is disordered.

This is an uncharacterized protein from Arabidopsis thaliana (Mouse-ear cress).